The primary structure comprises 941 residues: MSEYKHTLNLPHTEFPMRARLAEREPQRLQRWEEEDLYGAIRRARAGRERFILHDGPPYANGDIHIGHAVNKILKDIIVKARTLDGYDAPYIPGWDCHGLPIEHKVEEQAGKPGAELTYAQFRERCRAFAAEQVEGQRQDFKRLGVLGDWERPYLTMDYATEAGILRALARIFEGGHVTQGFKPVHWCADCGSALAEAEVEYEERTSPAVDVRFAVVDELALQQRVLLEGEGVQAGTASVVIWTTTPWTLPANRAVAVHPELEYVVVALDHSERLVLAAELLEATLQRAGVECYEVVGRCRGADLEGLSLQHPFLDRQVPVVLGEHVTTDGGTGCVHTAPGHGQEDFEVGQCYGLEVTNPVDGAGCFFEDTEHFAGLNVFDANPRVVEVLESRGALFHHEKYRHSYPHCWRHKTPVIFRATPQWFIDLDRHGMRECALAGIEGVRWMPDWGQARIDAMVRGRPDWCISRQRHWGVPIAVFIHRRSGEPHPQTPQHMEAVAARMEHEGLEAWWDLDPAELLGDEAAEYEKVTDILDVWFDSGVTHATVLEQREGLQVPADLYLEGSDQHRGWFQSSLLSSAAIRQAAPYRGVLTHGFTVDEQGHKMSKSRGNVVAPQDVMDRLGADILRLWVASADYSGEIAVSDNILQRTADAYRRMRNTARFLLGNLHGFEPGRDALVAEQLLPLDRWAVARTRALQERIVAAYDRYELHRIYHLLHNFCVVDMGGFYLDVLKDRLYTTPADSRARRSGQTAMYHIAEALVRWLAPILSFTADEIWGHLPGERREPVFTAEWYDGLFPLDDEPAEAAFWDRVMEVRTAVSRELERLRNEKVIGANLDAEVDLYVSSALAEELAPLGDELRFVLITSAARIHAATEAPVDAASATLEDGSEVRIAVAASAHDKCPRCWHRSPDIGASDEHPELCGRCVENVAGSGEYRATA.

The 'HIGH' region signature appears at 58–68 (PYANGDIHIGH). Glu-563 contacts L-isoleucyl-5'-AMP. A 'KMSKS' region motif is present at residues 604 to 608 (KMSKS). Lys-607 contacts ATP. Residues Cys-904, Cys-907, Cys-924, and Cys-927 each contribute to the Zn(2+) site.

It belongs to the class-I aminoacyl-tRNA synthetase family. IleS type 1 subfamily. As to quaternary structure, monomer. The cofactor is Zn(2+).

It is found in the cytoplasm. It catalyses the reaction tRNA(Ile) + L-isoleucine + ATP = L-isoleucyl-tRNA(Ile) + AMP + diphosphate. Its function is as follows. Catalyzes the attachment of isoleucine to tRNA(Ile). As IleRS can inadvertently accommodate and process structurally similar amino acids such as valine, to avoid such errors it has two additional distinct tRNA(Ile)-dependent editing activities. One activity is designated as 'pretransfer' editing and involves the hydrolysis of activated Val-AMP. The other activity is designated 'posttransfer' editing and involves deacylation of mischarged Val-tRNA(Ile). This chain is Isoleucine--tRNA ligase, found in Halorhodospira halophila (strain DSM 244 / SL1) (Ectothiorhodospira halophila (strain DSM 244 / SL1)).